The chain runs to 458 residues: Argininosuccinate lyase (458 aa).

The protein belongs to the lyase 1 family. Argininosuccinate lyase subfamily.

Its subcellular location is the cytoplasm. The enzyme catalyses 2-(N(omega)-L-arginino)succinate = fumarate + L-arginine. It participates in amino-acid biosynthesis; L-arginine biosynthesis; L-arginine from L-ornithine and carbamoyl phosphate: step 3/3. The polypeptide is Argininosuccinate lyase (Salmonella choleraesuis (strain SC-B67)).